The chain runs to 479 residues: Bifunctional aspartate aminotransferase and glutamate/aspartate-prephenate aminotransferase (479 aa).

The transit peptide at 1 to 79 directs the protein to the chloroplast; sequence MAATTTTSSS…VEVDISLSPR (79 aa). Glycine 111 is a binding site for L-aspartate. 172 to 173 is a binding site for pyridoxal 5'-phosphate; sequence AK. L-aspartate-binding residues include tryptophan 197 and asparagine 247. Residues asparagine 247, tyrosine 279, and 307–309 each bind pyridoxal 5'-phosphate; that span reads GFS. Lysine 310 is modified (N6-(pyridoxal phosphate)lysine). Arginine 318 lines the pyridoxal 5'-phosphate pocket. Position 449 (arginine 449) interacts with L-aspartate.

This sequence belongs to the class-I pyridoxal-phosphate-dependent aminotransferase family. In terms of assembly, homodimer. Pyridoxal 5'-phosphate serves as cofactor. In terms of tissue distribution, expressed in flowers, pistils, stamens, ovaries and at lower levels in leaves and sepals.

The protein resides in the plastid. The protein localises to the chloroplast. It carries out the reaction L-aspartate + 2-oxoglutarate = oxaloacetate + L-glutamate. The catalysed reaction is L-arogenate + oxaloacetate = prephenate + L-aspartate. It catalyses the reaction L-arogenate + 2-oxoglutarate = prephenate + L-glutamate. The protein operates within amino-acid biosynthesis; L-phenylalanine biosynthesis; L-arogenate from prephenate (L-Asp route): step 1/1. Its pathway is amino-acid biosynthesis; L-phenylalanine biosynthesis; L-arogenate from prephenate (L-Glu route): step 1/1. In terms of biological role, prokaryotic-type aspartate aminotransferase. Also has a prenate transaminase activity. Involved in the aromatic amino acids biosynthesis pathway via the arogenate route. Required for the transamination of prephenate into arogenate. Can use 2-oxoglutarate, oxaloacetate and prephenate as substrates, but not phenylpyruvate or 4-hydroxyphenylpyruvate. This chain is Bifunctional aspartate aminotransferase and glutamate/aspartate-prephenate aminotransferase, found in Petunia hybrida (Petunia).